We begin with the raw amino-acid sequence, 245 residues long: DNA polymerase sliding clamp 1 (245 aa).

Belongs to the PCNA family. Homotrimer. The subunits circularize to form a toroid; DNA passes through its center. Replication factor C (RFC) is required to load the toroid on the DNA.

Sliding clamp subunit that acts as a moving platform for DNA processing. Responsible for tethering the catalytic subunit of DNA polymerase and other proteins to DNA during high-speed replication. The protein is DNA polymerase sliding clamp 1 of Sulfurisphaera ohwakuensis.